The sequence spans 174 residues: Gamma-crystallin M3 (174 aa).

Beta/gamma crystallin 'Greek key' domains lie at 2–40 (GKII…RVES) and 41–82 (GCFV…RMVP). The interval 83–87 (QYRGP) is connecting peptide. Beta/gamma crystallin 'Greek key' domains lie at 88-128 (YRMR…HVMD) and 129-171 (GHWL…RRIM).

The protein belongs to the beta/gamma-crystallin family. Monomer.

In terms of biological role, crystallins are the dominant structural components of the vertebrate eye lens. The polypeptide is Gamma-crystallin M3 (Cyprinus carpio (Common carp)).